The sequence spans 424 residues: 26S proteasome regulatory subunit 4 homolog (424 aa).

The span at 1-11 (MSRDKSERDNL) shows a compositional bias: basic and acidic residues. Residues 1–33 (MSRDKSERDNLQDTTTINLRRRRRVKEGKAASK) are disordered. 210-217 (GLPGTGKT) serves as a coordination point for ATP.

Belongs to the AAA ATPase family. The 26S proteasome consists of a 20S proteasome core and two 19S regulatory subunits. The 20S proteasome core is composed of 28 subunits that are arranged in four stacked rings, resulting in a barrel-shaped structure. The two end rings are each formed by seven alpha subunits, and the two central rings are each formed by seven beta subunits. The catalytic chamber with the active sites is on the inside of the barrel.

It is found in the cytoplasm. The protein localises to the nucleus. Its function is as follows. Acts as a regulatory subunit of the 26S proteasome which degrades poly-ubiquitinated proteins in the cytoplasm and in the nucleus. It is essential for the regulated turnover of proteins and for the removal of misfolded proteins. The proteasome is a multicatalytic proteinase complex that is characterized by its ability to cleave peptides with Arg, Phe, Tyr, Leu, and Glu adjacent to the leaving group at neutral or slightly basic pH. This Encephalitozoon cuniculi (strain GB-M1) (Microsporidian parasite) protein is 26S proteasome regulatory subunit 4 homolog (RPT2).